A 415-amino-acid chain; its full sequence is ORC1-type DNA replication protein 2 (415 aa).

Residues 69 to 73 (TGKSV), tyrosine 215, and arginine 227 contribute to the ATP site.

The protein belongs to the CDC6/cdc18 family.

Functionally, involved in regulation of DNA replication. The sequence is that of ORC1-type DNA replication protein 2 (cdc6-2) from Sulfolobus acidocaldarius (strain ATCC 33909 / DSM 639 / JCM 8929 / NBRC 15157 / NCIMB 11770).